The following is a 426-amino-acid chain: 3-phosphoshikimate 1-carboxyvinyltransferase (426 aa).

Residues lysine 22, serine 23, and arginine 27 each contribute to the 3-phosphoshikimate site. Lysine 22 is a phosphoenolpyruvate binding site. Phosphoenolpyruvate contacts are provided by glycine 96 and arginine 124. 3-phosphoshikimate-binding residues include serine 170, serine 171, glutamine 172, serine 198, aspartate 314, asparagine 337, and lysine 341. Glutamine 172 is a binding site for phosphoenolpyruvate. Aspartate 314 functions as the Proton acceptor in the catalytic mechanism. Positions 345, 387, and 412 each coordinate phosphoenolpyruvate.

This sequence belongs to the EPSP synthase family. As to quaternary structure, monomer.

It localises to the cytoplasm. It catalyses the reaction 3-phosphoshikimate + phosphoenolpyruvate = 5-O-(1-carboxyvinyl)-3-phosphoshikimate + phosphate. It functions in the pathway metabolic intermediate biosynthesis; chorismate biosynthesis; chorismate from D-erythrose 4-phosphate and phosphoenolpyruvate: step 6/7. Its function is as follows. Catalyzes the transfer of the enolpyruvyl moiety of phosphoenolpyruvate (PEP) to the 5-hydroxyl of shikimate-3-phosphate (S3P) to produce enolpyruvyl shikimate-3-phosphate and inorganic phosphate. The protein is 3-phosphoshikimate 1-carboxyvinyltransferase of Shewanella oneidensis (strain ATCC 700550 / JCM 31522 / CIP 106686 / LMG 19005 / NCIMB 14063 / MR-1).